Reading from the N-terminus, the 570-residue chain is Urease subunit alpha (570 aa).

Residues 132–570 (GGFDSHIHYI…LPLAQRYFLF (439 aa)) enclose the Urease domain. Ni(2+)-binding residues include histidine 137, histidine 139, and lysine 220. Lysine 220 bears the N6-carboxylysine mark. Histidine 222 lines the substrate pocket. Ni(2+) contacts are provided by histidine 249 and histidine 275. The active-site Proton donor is histidine 323. Residue aspartate 363 coordinates Ni(2+).

Belongs to the metallo-dependent hydrolases superfamily. Urease alpha subunit family. Heterotrimer of UreA (gamma), UreB (beta) and UreC (alpha) subunits. Three heterotrimers associate to form the active enzyme. It depends on Ni cation as a cofactor. Carboxylation allows a single lysine to coordinate two nickel ions.

The protein resides in the cytoplasm. The catalysed reaction is urea + 2 H2O + H(+) = hydrogencarbonate + 2 NH4(+). It participates in nitrogen metabolism; urea degradation; CO(2) and NH(3) from urea (urease route): step 1/1. The sequence is that of Urease subunit alpha from Ruegeria sp. (strain TM1040) (Silicibacter sp.).